The following is a 417-amino-acid chain: Serine hydroxymethyltransferase 1 (417 aa).

(6S)-5,6,7,8-tetrahydrofolate is bound by residues Leu-121 and 125–127 (GHL). N6-(pyridoxal phosphate)lysine is present on Lys-230. Residue 355–357 (SPF) participates in (6S)-5,6,7,8-tetrahydrofolate binding.

This sequence belongs to the SHMT family. Homodimer. It depends on pyridoxal 5'-phosphate as a cofactor.

The protein localises to the cytoplasm. The enzyme catalyses (6R)-5,10-methylene-5,6,7,8-tetrahydrofolate + glycine + H2O = (6S)-5,6,7,8-tetrahydrofolate + L-serine. Its pathway is one-carbon metabolism; tetrahydrofolate interconversion. It participates in amino-acid biosynthesis; glycine biosynthesis; glycine from L-serine: step 1/1. Catalyzes the reversible interconversion of serine and glycine with tetrahydrofolate (THF) serving as the one-carbon carrier. This reaction serves as the major source of one-carbon groups required for the biosynthesis of purines, thymidylate, methionine, and other important biomolecules. Also exhibits THF-independent aldolase activity toward beta-hydroxyamino acids, producing glycine and aldehydes, via a retro-aldol mechanism. This chain is Serine hydroxymethyltransferase 1, found in Pseudomonas syringae pv. tomato (strain ATCC BAA-871 / DC3000).